The primary structure comprises 116 residues: Iron-sulfur cluster insertion protein ErpA (116 aa).

The iron-sulfur cluster site is built by C44, C108, and C110.

This sequence belongs to the HesB/IscA family. As to quaternary structure, homodimer. The cofactor is iron-sulfur cluster.

Its function is as follows. Required for insertion of 4Fe-4S clusters for at least IspG. The protein is Iron-sulfur cluster insertion protein ErpA of Nitrosococcus oceani (strain ATCC 19707 / BCRC 17464 / JCM 30415 / NCIMB 11848 / C-107).